Reading from the N-terminus, the 282-residue chain is Elongation factor Ts (282 aa).

The interval 79 to 82 (TDFV) is involved in Mg(2+) ion dislocation from EF-Tu.

The protein belongs to the EF-Ts family.

Its subcellular location is the cytoplasm. Functionally, associates with the EF-Tu.GDP complex and induces the exchange of GDP to GTP. It remains bound to the aminoacyl-tRNA.EF-Tu.GTP complex up to the GTP hydrolysis stage on the ribosome. The polypeptide is Elongation factor Ts (Colwellia psychrerythraea (strain 34H / ATCC BAA-681) (Vibrio psychroerythus)).